We begin with the raw amino-acid sequence, 587 residues long: Arginine--tRNA ligase (587 aa).

Positions 126–136 match the 'HIGH' region motif; it reads ANPTGPLHVGH.

It belongs to the class-I aminoacyl-tRNA synthetase family. In terms of assembly, monomer.

It localises to the cytoplasm. It catalyses the reaction tRNA(Arg) + L-arginine + ATP = L-arginyl-tRNA(Arg) + AMP + diphosphate. The protein is Arginine--tRNA ligase of Azoarcus sp. (strain BH72).